Here is a 215-residue protein sequence, read N- to C-terminus: FMN-dependent NADH:quinone oxidoreductase (215 aa).

FMN is bound at residue 17–19; that stretch reads SAS.

It belongs to the azoreductase type 1 family. Homodimer. FMN is required as a cofactor.

The enzyme catalyses 2 a quinone + NADH + H(+) = 2 a 1,4-benzosemiquinone + NAD(+). It catalyses the reaction N,N-dimethyl-1,4-phenylenediamine + anthranilate + 2 NAD(+) = 2-(4-dimethylaminophenyl)diazenylbenzoate + 2 NADH + 2 H(+). Functionally, quinone reductase that provides resistance to thiol-specific stress caused by electrophilic quinones. In terms of biological role, also exhibits azoreductase activity. Catalyzes the reductive cleavage of the azo bond in aromatic azo compounds to the corresponding amines. In Clostridium botulinum (strain Alaska E43 / Type E3), this protein is FMN-dependent NADH:quinone oxidoreductase.